The following is a 113-amino-acid chain: Hydrogenase maturation factor HypA (113 aa).

His-2 provides a ligand contact to Ni(2+). The Zn(2+) site is built by Cys-73, Cys-76, Cys-89, and Cys-92.

This sequence belongs to the HypA/HybF family.

Involved in the maturation of [NiFe] hydrogenases. Required for nickel insertion into the metal center of the hydrogenase. The sequence is that of Hydrogenase maturation factor HypA from Aeromonas hydrophila subsp. hydrophila (strain ATCC 7966 / DSM 30187 / BCRC 13018 / CCUG 14551 / JCM 1027 / KCTC 2358 / NCIMB 9240 / NCTC 8049).